The chain runs to 474 residues: ATP synthase subunit beta 1 (474 aa).

ATP is bound at residue 157–164 (GGAGVGKT).

The protein belongs to the ATPase alpha/beta chains family. As to quaternary structure, F-type ATPases have 2 components, CF(1) - the catalytic core - and CF(0) - the membrane proton channel. CF(1) has five subunits: alpha(3), beta(3), gamma(1), delta(1), epsilon(1). CF(0) has three main subunits: a(1), b(2) and c(9-12). The alpha and beta chains form an alternating ring which encloses part of the gamma chain. CF(1) is attached to CF(0) by a central stalk formed by the gamma and epsilon chains, while a peripheral stalk is formed by the delta and b chains.

The protein resides in the cell inner membrane. It catalyses the reaction ATP + H2O + 4 H(+)(in) = ADP + phosphate + 5 H(+)(out). Its function is as follows. Produces ATP from ADP in the presence of a proton gradient across the membrane. The catalytic sites are hosted primarily by the beta subunits. The sequence is that of ATP synthase subunit beta 1 from Polaromonas naphthalenivorans (strain CJ2).